The following is an 86-amino-acid chain: Probable weak neurotoxin NNAM2 (86 aa).

The signal sequence occupies residues 1 to 21; that stretch reads MKTLLLTLVVVTIVCLDLGYT. Cystine bridges form between Cys24/Cys45, Cys27/Cys32, Cys38/Cys63, Cys67/Cys78, and Cys79/Cys84.

Belongs to the three-finger toxin family. Ancestral subfamily. Orphan group II sub-subfamily. Expressed by the venom gland.

The protein resides in the secreted. In terms of biological role, binds with low affinity to muscular (alpha-1-beta-1-delta-epsilon/CHRNA1-CHRNB1-CHRND-CHRNE) and very low affinity to neuronal (alpha-7/CHRNA7) nicotinic acetylcholine receptor (nAChR). This chain is Probable weak neurotoxin NNAM2, found in Naja atra (Chinese cobra).